A 309-amino-acid polypeptide reads, in one-letter code: Uricase-2 isozyme 1 (309 aa).

Residues Lys18 and Thr64 each act as charge relay system in the active site. Urate-binding residues include Thr64, Asp65, Phe166, Arg183, Val238, Gln239, and Asn265. His267 (charge relay system) is an active-site residue. The short motif at 307-309 is the Microbody targeting signal element; the sequence is SKL.

Belongs to the uricase family. In terms of assembly, homotetramer. The N-terminus is blocked. In terms of tissue distribution, expressed predominantly in the uninfected cells of the central tissue of the root nodule.

It is found in the peroxisome. The catalysed reaction is urate + O2 + H2O = 5-hydroxyisourate + H2O2. It functions in the pathway purine metabolism; urate degradation; (S)-allantoin from urate: step 1/3. Functionally, catalyzes the oxidation of uric acid to 5-hydroxyisourate, which is further processed to form (S)-allantoin. The chain is Uricase-2 isozyme 1 from Glycine max (Soybean).